We begin with the raw amino-acid sequence, 342 residues long: GTPase Obg (342 aa).

One can recognise an Obg domain in the interval Met-1 to Ile-159. The region spanning Ala-160 to Asp-327 is the OBG-type G domain. GTP-binding positions include Gly-166–Ser-173, Phe-191–His-195, Asp-212–Gly-215, Ser-279–Asp-282, and Ser-308–Ala-310. Mg(2+) contacts are provided by Ser-173 and Thr-193.

The protein belongs to the TRAFAC class OBG-HflX-like GTPase superfamily. OBG GTPase family. In terms of assembly, monomer. Requires Mg(2+) as cofactor.

It is found in the cytoplasm. Its function is as follows. An essential GTPase which binds GTP, GDP and possibly (p)ppGpp with moderate affinity, with high nucleotide exchange rates and a fairly low GTP hydrolysis rate. Plays a role in control of the cell cycle, stress response, ribosome biogenesis and in those bacteria that undergo differentiation, in morphogenesis control. This chain is GTPase Obg, found in Methylobacterium nodulans (strain LMG 21967 / CNCM I-2342 / ORS 2060).